The following is a 784-amino-acid chain: ATP-dependent 6-phosphofructokinase, platelet type (784 aa).

Met1 bears the N-acetylmethionine mark. Residues 1–399 (MDADDSRAPK…NLNTYKRLAI (399 aa)) form an N-terminal catalytic PFK domain 1 region. 3 positions are modified to phosphoserine: Ser6, Ser12, and Ser21. ATP contacts are provided by residues Gly34, 97-98 (RC), and 127-130 (GDGS). Asp128 is a binding site for Mg(2+). Ser142 is subject to Phosphoserine. Substrate is bound by residues 173-175 (SID), Arg210, 217-219 (MGR), Glu273, Arg301, and 307-310 (HVQR). Asp175 functions as the Proton acceptor in the catalytic mechanism. A Phosphoserine modification is found at Ser386. Lys395 is modified (N6-acetyllysine). The interdomain linker stretch occupies residues 400 to 411 (KLPDDQIPKTNC). The C-terminal regulatory PFK domain 2 stretch occupies residues 412–784 (NVAVINVGAP…QLEHVQPWSV (373 aa)). Arg481 lines the beta-D-fructose 2,6-bisphosphate pocket. Lys486 is modified (N6-acetyllysine). Beta-D-fructose 2,6-bisphosphate is bound by residues 538 to 542 (TVSNN), Arg576, 583 to 585 (MGG), and Glu639. The O-linked (GlcNAc) serine glycan is linked to Ser540. Tyr651 carries the post-translational modification Phosphotyrosine. Beta-D-fructose 2,6-bisphosphate contacts are provided by residues Arg665 and 671–674 (HMQQ). An N6-acetyllysine modification is found at Lys688. A beta-D-fructose 2,6-bisphosphate-binding site is contributed by Arg744. Residue Ser783 is modified to Phosphoserine.

Belongs to the phosphofructokinase type A (PFKA) family. ATP-dependent PFK group I subfamily. Eukaryotic two domain clade 'E' sub-subfamily. Homo- and heterotetramers. Phosphofructokinase (PFK) enzyme functions as a tetramer composed of different combinations of 3 types of subunits, called PFKM (where M stands for Muscle), PFKL (Liver) and PFKP (Platelet). The composition of the PFK tetramer differs according to the tissue type it is present in. In muscles, it is composed of 4 PFKM subunits (also called M4). In the liver, the predominant form is a tetramer of PFKL subunits (L4). In erythrocytes, both PFKM and PFKL subunits randomly tetramerize to form M4, L4 and other combinations (ML3, M2L2, M3L). In platelets, brain and fibroblasts, PFK contains a higher proportion of PFKP subunits. The kinetic and regulatory properties of the tetrameric enzyme are dependent on the subunit composition, hence can vary across tissues. Interacts with ATG4B; promoting phosphorylation of ATG4B. The cofactor is Mg(2+). Post-translationally, phosphorylation at Ser-386 promotes interaction with ATG4B. GlcNAcylation decreases enzyme activity.

Its subcellular location is the cytoplasm. The catalysed reaction is beta-D-fructose 6-phosphate + ATP = beta-D-fructose 1,6-bisphosphate + ADP + H(+). It functions in the pathway carbohydrate degradation; glycolysis; D-glyceraldehyde 3-phosphate and glycerone phosphate from D-glucose: step 3/4. Allosterically activated by ADP, AMP, or fructose 2,6-bisphosphate, and allosterically inhibited by ATP or citrate. Catalyzes the phosphorylation of D-fructose 6-phosphate to fructose 1,6-bisphosphate by ATP, the first committing step of glycolysis. This is ATP-dependent 6-phosphofructokinase, platelet type (PFKP) from Homo sapiens (Human).